The following is a 447-amino-acid chain: MAEDIETKVVKAKKASIELSSVSEEVKNRALEAMAESLDRERKAILEANSKDLEYASELKKVGKLTQALVDRLKVTDSKIDGMIAGIMDVIKLKDPVGETLSTLELDNDLILYQISCPIGLIGVIFESRPDVVPQVMSLCLKSGNATIFKGGSEARESNRTIFEILVKAIESTEGMPKGAFQLMETREEIMSLLSLDAYVDLLIPRGSNEFVKFIQDNTKIPVLGHTSGICHIYVDEFADPDTAWKVCFDAKVQYPAVCNAIETLLVNRKIAEAFLPKMAEMYIKAGVELRCDKDSYILLAEKGLSPLSKATEEDWSLEYNDLILSIKLVDTIKEAIAHINTFGSHHTDGIITENASRRKEFIGLVDSSSVMVNASTRFADGYRYGKGAEVGISTNKIHSRGPVGMEGLLIYKYILMGKGQVVADYAGENAKPYTHRKLDLKFADVN.

Belongs to the gamma-glutamyl phosphate reductase family.

It localises to the cytoplasm. The enzyme catalyses L-glutamate 5-semialdehyde + phosphate + NADP(+) = L-glutamyl 5-phosphate + NADPH + H(+). It participates in amino-acid biosynthesis; L-proline biosynthesis; L-glutamate 5-semialdehyde from L-glutamate: step 2/2. In terms of biological role, catalyzes the NADPH-dependent reduction of L-glutamate 5-phosphate into L-glutamate 5-semialdehyde and phosphate. The product spontaneously undergoes cyclization to form 1-pyrroline-5-carboxylate. The sequence is that of Gamma-glutamyl phosphate reductase from Methanosarcina acetivorans (strain ATCC 35395 / DSM 2834 / JCM 12185 / C2A).